Here is a 503-residue protein sequence, read N- to C-terminus: Carboxyl-terminal PDZ ligand of neuronal nitric oxide synthase protein (503 aa).

Residues 26-191 (FQHGISFEAK…ESERNSDGSG (166 aa)) form the PID domain. Residues 170–212 (HTQQNADGQEDGESERNSDGSGDPGRQLTGAERVSTAAAEETD) form a disordered region. A phosphoserine mark is found at S183, S187, S190, and S262. Residues 318–359 (AAEAAARLEAQARVHQLLLQNKDMLQHISLLVKQVQELELKL) are a coiled coil. Phosphoserine is present on residues S367, S370, S397, and S413. An interaction with NOS1 region spans residues 491–503 (QELGDSLDDEIAV). Residues 501–503 (IAV) carry the PDZ-binding motif.

As to quaternary structure, interacts with the PDZ domain of NOS1 or the second PDZ domain of DLG4 through its C-terminus. Interacts with RASD1 and SYN1, SYN2 and SYN3 via its PID domain. Forms a ternary complex with NOS1 and SYN1. Forms a ternary complex with NOS1 and RASD1.

It is found in the cell projection. It localises to the filopodium. The protein resides in the podosome. Its function is as follows. Adapter protein involved in neuronal nitric-oxide (NO) synthesis regulation via its association with nNOS/NOS1. The complex formed with NOS1 and synapsins is necessary for specific NO and synapsin functions at a presynaptic level. Mediates an indirect interaction between NOS1 and RASD1 leading to enhance the ability of NOS1 to activate RASD1. Competes with DLG4 for interaction with NOS1, possibly affecting NOS1 activity by regulating the interaction between NOS1 and DLG4. In kidney podocytes, plays a role in podosomes and filopodia formation through CDC42 activation. The protein is Carboxyl-terminal PDZ ligand of neuronal nitric oxide synthase protein of Mus musculus (Mouse).